Here is a 471-residue protein sequence, read N- to C-terminus: Ribulose bisphosphate carboxylase large chain 2 (471 aa).

2 residues coordinate substrate: asparagine 116 and threonine 166. Lysine 168 functions as the Proton acceptor in the catalytic mechanism. Residue lysine 170 coordinates substrate. Mg(2+) is bound by residues lysine 194, aspartate 196, and glutamate 197. Lysine 194 carries the N6-carboxylysine modification. Residue histidine 287 is the Proton acceptor of the active site. Arginine 288, histidine 320, and serine 372 together coordinate substrate.

The protein belongs to the RuBisCO large chain family. Type I subfamily. As to quaternary structure, heterohexadecamer of 8 large chains and 8 small chains; disulfide-linked. The disulfide link is formed within the large subunit homodimers. Mg(2+) is required as a cofactor. The disulfide bond which can form in the large chain dimeric partners within the hexadecamer appears to be associated with oxidative stress and protein turnover.

It catalyses the reaction 2 (2R)-3-phosphoglycerate + 2 H(+) = D-ribulose 1,5-bisphosphate + CO2 + H2O. It carries out the reaction D-ribulose 1,5-bisphosphate + O2 = 2-phosphoglycolate + (2R)-3-phosphoglycerate + 2 H(+). Its function is as follows. RuBisCO catalyzes two reactions: the carboxylation of D-ribulose 1,5-bisphosphate, the primary event in carbon dioxide fixation, as well as the oxidative fragmentation of the pentose substrate. Both reactions occur simultaneously and in competition at the same active site. The protein is Ribulose bisphosphate carboxylase large chain 2 of Allochromatium vinosum (strain ATCC 17899 / DSM 180 / NBRC 103801 / NCIMB 10441 / D) (Chromatium vinosum).